Here is a 339-residue protein sequence, read N- to C-terminus: Tetraacyldisaccharide 4'-kinase (339 aa).

ATP is bound at residue 53-60 (TCGGAGKT).

This sequence belongs to the LpxK family.

The enzyme catalyses a lipid A disaccharide + ATP = a lipid IVA + ADP + H(+). It functions in the pathway glycolipid biosynthesis; lipid IV(A) biosynthesis; lipid IV(A) from (3R)-3-hydroxytetradecanoyl-[acyl-carrier-protein] and UDP-N-acetyl-alpha-D-glucosamine: step 6/6. Transfers the gamma-phosphate of ATP to the 4'-position of a tetraacyldisaccharide 1-phosphate intermediate (termed DS-1-P) to form tetraacyldisaccharide 1,4'-bis-phosphate (lipid IVA). The chain is Tetraacyldisaccharide 4'-kinase from Bartonella henselae (strain ATCC 49882 / DSM 28221 / CCUG 30454 / Houston 1) (Rochalimaea henselae).